Reading from the N-terminus, the 398-residue chain is Dihydroorotase (398 aa).

Zn(2+) contacts are provided by His58 and His60. Substrate-binding positions include His60–Arg62 and Asn92. Residues Asp151, His178, and His215 each coordinate Zn(2+). Asn256 is a substrate binding site. Residue Asp283 coordinates Zn(2+). Residue Asp283 is part of the active site. Substrate-binding positions include His287 and Pro297–Gly298.

Belongs to the metallo-dependent hydrolases superfamily. DHOase family. Class I DHOase subfamily. Requires Zn(2+) as cofactor.

It catalyses the reaction (S)-dihydroorotate + H2O = N-carbamoyl-L-aspartate + H(+). It participates in pyrimidine metabolism; UMP biosynthesis via de novo pathway; (S)-dihydroorotate from bicarbonate: step 3/3. In terms of biological role, catalyzes the reversible cyclization of carbamoyl aspartate to dihydroorotate. This Clostridium botulinum (strain Eklund 17B / Type B) protein is Dihydroorotase.